Consider the following 171-residue polypeptide: Small ribosomal subunit protein uS5 (171 aa).

The 64-residue stretch at 15 to 78 folds into the S5 DRBM domain; that stretch reads LEEKVVKINR…EKAKKQLVRI (64 aa).

This sequence belongs to the universal ribosomal protein uS5 family. Part of the 30S ribosomal subunit. Contacts proteins S4 and S8.

Functionally, with S4 and S12 plays an important role in translational accuracy. Located at the back of the 30S subunit body where it stabilizes the conformation of the head with respect to the body. In Onion yellows phytoplasma (strain OY-M), this protein is Small ribosomal subunit protein uS5.